A 74-amino-acid polypeptide reads, in one-letter code: CLAVATA3/ESR (CLE)-related protein 19 (74 aa).

The N-terminal stretch at 1-24 (MKIKGLMILASSLLILAFIHQSES) is a signal peptide. N-linked (GlcNAc...) asparagine glycosylation is found at asparagine 34 and asparagine 54. Residues proline 65 and proline 68 each carry the hydroxyproline modification. Proline 68 is a glycosylation site (O-linked (Ara...) hydroxyproline).

It belongs to the CLV3/ESR signal peptide family. Post-translationally, the O-glycosylation (arabinosylation) of the hydroxyproline Pro-68 enhances binding affinity of the CLE19p peptide for its receptor. Mostly expressed in heart-shape embryos, pollen and young flower buds, and, to a lower extent, in inflorescence, leaves and roots.

The protein localises to the secreted. Its subcellular location is the extracellular space. In terms of biological role, extracellular signal peptide that regulates cell fate. Represses root apical meristem maintenance. The sequence is that of CLAVATA3/ESR (CLE)-related protein 19 from Arabidopsis thaliana (Mouse-ear cress).